Here is a 346-residue protein sequence, read N- to C-terminus: Methylthioribose-1-phosphate isomerase (346 aa).

Residues Arg54–Ala56, Arg91, and Gln192 each bind substrate. The active-site Proton donor is the Asp233. Substrate is bound at residue Asn243–Lys244.

It belongs to the eIF-2B alpha/beta/delta subunits family. MtnA subfamily.

It carries out the reaction 5-(methylsulfanyl)-alpha-D-ribose 1-phosphate = 5-(methylsulfanyl)-D-ribulose 1-phosphate. The protein operates within amino-acid biosynthesis; L-methionine biosynthesis via salvage pathway; L-methionine from S-methyl-5-thio-alpha-D-ribose 1-phosphate: step 1/6. In terms of biological role, catalyzes the interconversion of methylthioribose-1-phosphate (MTR-1-P) into methylthioribulose-1-phosphate (MTRu-1-P). The protein is Methylthioribose-1-phosphate isomerase of Yersinia pseudotuberculosis serotype IB (strain PB1/+).